The primary structure comprises 330 residues: Calponin-3 (330 aa).

The residue at position 23 (K23) is an N6-acetyllysine. Residues 26–130 (QQAEEDLRNW…TLVALAGLAK (105 aa)) form the Calponin-homology (CH) domain. K158 is modified (N6-methyllysine). Calponin-like repeat units lie at residues 164 to 189 (IGLQ…RHLY), 204 to 229 (ISLQ…RDIY), and 243 to 268 (ISLQ…RQVY). Positions 279–330 (PVIHNGSQGTGTNGSEISDSDYQAEYPDEYHGEYPDDYPREYQYGDDQGIDY) are disordered. Over residues 306 to 318 (DEYHGEYPDDYPR) the composition is skewed to basic and acidic residues.

The protein belongs to the calponin family.

Thin filament-associated protein that is implicated in the regulation and modulation of smooth muscle contraction. It is capable of binding to actin, calmodulin and tropomyosin. The interaction of calponin with actin inhibits the actomyosin Mg-ATPase activity. This chain is Calponin-3 (Cnn3), found in Mus musculus (Mouse).